Reading from the N-terminus, the 87-residue chain is Small ribosomal subunit protein uS15 (87 aa).

This sequence belongs to the universal ribosomal protein uS15 family. In terms of assembly, part of the 30S ribosomal subunit. Forms a bridge to the 50S subunit in the 70S ribosome, contacting the 23S rRNA.

Its function is as follows. One of the primary rRNA binding proteins, it binds directly to 16S rRNA where it helps nucleate assembly of the platform of the 30S subunit by binding and bridging several RNA helices of the 16S rRNA. Forms an intersubunit bridge (bridge B4) with the 23S rRNA of the 50S subunit in the ribosome. This Dehalococcoides mccartyi (strain ATCC BAA-2266 / KCTC 15142 / 195) (Dehalococcoides ethenogenes (strain 195)) protein is Small ribosomal subunit protein uS15.